Here is a 540-residue protein sequence, read N- to C-terminus: Ribonuclease Y (540 aa).

A helical membrane pass occupies residues 4–24 (TILVPVAVAIVSVLVGGCAGY). Residues 230–293 (TVSVVNLPND…EIAKRALERL (64 aa)) enclose the KH domain. The HD domain maps to 356-449 (VLSHSIEVGK…VVAADTISSA (94 aa)).

It belongs to the RNase Y family.

Its subcellular location is the cell membrane. Endoribonuclease that initiates mRNA decay. This chain is Ribonuclease Y, found in Lactobacillus gasseri (strain ATCC 33323 / DSM 20243 / BCRC 14619 / CIP 102991 / JCM 1131 / KCTC 3163 / NCIMB 11718 / NCTC 13722 / AM63).